Consider the following 359-residue polypeptide: Maleylacetate reductase 2 (359 aa).

Belongs to the iron-containing alcohol dehydrogenase family. As to quaternary structure, homodimer.

The catalysed reaction is 3-oxoadipate + NAD(+) = maleylacetate + NADH + H(+). It catalyses the reaction 3-oxoadipate + NADP(+) = maleylacetate + NADPH + H(+). The protein operates within aromatic compound metabolism; 3-chlorocatechol degradation. With respect to regulation, inhibited by p-chloromercuribenzoate and by 3-oxoadipate, and, in a temperature-dependent manner, by manganese. In terms of biological role, plays a major role in the degradation of chloroaromatic compounds by channeling maleylacetate and some of its substituted derivatives into the 3-oxoadipate pathway. This enzyme converts maleylacetate and 2-chloromaleylacetate with similar efficiencies. NADH is preferred to NADPH as the cosubstrate. The sequence is that of Maleylacetate reductase 2 (tfdFII) from Cupriavidus pinatubonensis (strain JMP 134 / LMG 1197) (Cupriavidus necator (strain JMP 134)).